The primary structure comprises 66 residues: Large ribosomal subunit protein bL35 (66 aa).

Positions 1–15 are enriched in basic residues; sequence MPKMKTKSSAKKRFK. The tract at residues 1-32 is disordered; sequence MPKMKTKSSAKKRFKMTATGKVRAGQAGKRHG.

The protein belongs to the bacterial ribosomal protein bL35 family.

This Dinoroseobacter shibae (strain DSM 16493 / NCIMB 14021 / DFL 12) protein is Large ribosomal subunit protein bL35.